A 380-amino-acid chain; its full sequence is Elongation factor Ts, mitochondrial (380 aa).

This sequence belongs to the EF-Ts family.

It is found in the mitochondrion. Its function is as follows. Associates with the EF-Tu.GDP complex and induces the exchange of GDP to GTP. It remains bound to the aminoacyl-tRNA.EF-Tu.GTP complex up to the GTP hydrolysis stage on the ribosome. The polypeptide is Elongation factor Ts, mitochondrial (Plasmodium chabaudi chabaudi).